A 390-amino-acid chain; its full sequence is Trehalose-phosphate phosphatase (390 aa).

The Nucleophile role is filled by Asp150. Mg(2+) is bound by residues Asp150, Asp152, and Asp333. Residue 150–152 (DFD) participates in substrate binding.

This sequence belongs to the trehalose phosphatase family. It depends on Mg(2+) as a cofactor.

It carries out the reaction alpha,alpha-trehalose 6-phosphate + H2O = alpha,alpha-trehalose + phosphate. The protein operates within glycan biosynthesis; trehalose biosynthesis. Removes the phosphate from trehalose 6-phosphate to produce free trehalose. This is Trehalose-phosphate phosphatase (otsB) from Mycobacterium marinum (strain ATCC BAA-535 / M).